Here is a 114-residue protein sequence, read N- to C-terminus: V-type proton ATPase subunit G (114 aa).

The residue at position 2 (serine 2) is an N-acetylserine.

Belongs to the V-ATPase G subunit family. In terms of assembly, V-ATPase is a heteromultimeric enzyme composed of a peripheral catalytic V1 complex (components A to H) attached to an integral membrane V0 proton pore complex (components: a, c, c', c'', d, e, f and VOA1).

The protein resides in the vacuole membrane. Its function is as follows. Subunit of the V1 complex of vacuolar(H+)-ATPase (V-ATPase), a multisubunit enzyme composed of a peripheral complex (V1) that hydrolyzes ATP and a membrane integral complex (V0) that translocates protons. V-ATPase is responsible for acidifying and maintaining the pH of intracellular compartments. This is V-type proton ATPase subunit G from Saccharomyces cerevisiae (strain ATCC 204508 / S288c) (Baker's yeast).